Consider the following 316-residue polypeptide: Aspartate carbamoyltransferase catalytic subunit (316 aa).

Residues R66 and T67 each coordinate carbamoyl phosphate. K94 lines the L-aspartate pocket. Residues R116, H146, and Q149 each coordinate carbamoyl phosphate. 2 residues coordinate L-aspartate: R180 and R235. G276 and P277 together coordinate carbamoyl phosphate.

It belongs to the aspartate/ornithine carbamoyltransferase superfamily. ATCase family. As to quaternary structure, heterododecamer (2C3:3R2) of six catalytic PyrB chains organized as two trimers (C3), and six regulatory PyrI chains organized as three dimers (R2).

It catalyses the reaction carbamoyl phosphate + L-aspartate = N-carbamoyl-L-aspartate + phosphate + H(+). The protein operates within pyrimidine metabolism; UMP biosynthesis via de novo pathway; (S)-dihydroorotate from bicarbonate: step 2/3. In terms of biological role, catalyzes the condensation of carbamoyl phosphate and aspartate to form carbamoyl aspartate and inorganic phosphate, the committed step in the de novo pyrimidine nucleotide biosynthesis pathway. The protein is Aspartate carbamoyltransferase catalytic subunit of Stenotrophomonas maltophilia (strain R551-3).